The chain runs to 132 residues: Myelin P2 protein (132 aa).

Ser2 is modified (N-acetylserine). Arg107 contributes to the (9Z)-octadecenoate binding site. Arg107 provides a ligand contact to hexadecanoate. A disulfide bridge connects residues Cys118 and Cys125. 127–129 (RIY) lines the (9Z)-octadecenoate pocket. 127–129 (RIY) serves as a coordination point for hexadecanoate.

The protein belongs to the calycin superfamily. Fatty-acid binding protein (FABP) family. In terms of assembly, monomer.

It is found in the cytoplasm. Functionally, may play a role in lipid transport protein in Schwann cells. May bind cholesterol. The polypeptide is Myelin P2 protein (Sus scrofa (Pig)).